The sequence spans 142 residues: Putative pterin-4-alpha-carbinolamine dehydratase (142 aa).

The protein belongs to the pterin-4-alpha-carbinolamine dehydratase family.

It carries out the reaction (4aS,6R)-4a-hydroxy-L-erythro-5,6,7,8-tetrahydrobiopterin = (6R)-L-erythro-6,7-dihydrobiopterin + H2O. In Caenorhabditis elegans, this protein is Putative pterin-4-alpha-carbinolamine dehydratase (pcbd-1).